We begin with the raw amino-acid sequence, 405 residues long: Deoxyguanosinetriphosphate triphosphohydrolase-like protein (405 aa).

The HD domain occupies 75-219; it reads RLTHTIEVAQ…AAIADDIAYN (145 aa).

The protein belongs to the dGTPase family. Type 2 subfamily.

This Sinorhizobium medicae (strain WSM419) (Ensifer medicae) protein is Deoxyguanosinetriphosphate triphosphohydrolase-like protein.